We begin with the raw amino-acid sequence, 650 residues long: Flap endonuclease 1 (650 aa).

An N-domain region spans residues 1–106; that stretch reads MGIKGLTKFI…SELEKRGEKR (106 aa). Aspartate 34 provides a ligand contact to Mg(2+). Residues arginine 47 and arginine 72 each contribute to the DNA site. Mg(2+) contacts are provided by aspartate 88, glutamate 160, glutamate 162, aspartate 181, and aspartate 183. The tract at residues 124-266 is I-domain; sequence EIKKQSGRTV…KTAYNLIKEY (143 aa). Glutamate 160 provides a ligand contact to DNA. DNA contacts are provided by glycine 244 and aspartate 246. Residue aspartate 246 participates in Mg(2+) binding. An interaction with PCNA region spans residues 349–357; the sequence is TQRRLDNFF. Positions 371–592 are disordered; sequence ETKKEQTLPA…NSYNNIKNNN (222 aa). Basic and acidic residues-rich tracts occupy residues 413-469, 478-502, and 511-524; these read MKEE…KKSL, DSDK…EKIN, and DHSR…KDNI. Low complexity predominate over residues 525–562; that stretch reads SDINNNNNNNNNNSSSNNNNISNNHFNSVSSNSTFNSS. The segment covering 565–581 has biased composition (basic and acidic residues); that stretch reads LKSEDTLKSNSPLKEDS. The span at 582–592 shows a compositional bias: low complexity; that stretch reads PNSYNNIKNNN.

The protein belongs to the XPG/RAD2 endonuclease family. FEN1 subfamily. As to quaternary structure, interacts with PCNA1 and PCNA2. Three molecules of FEN1 bind to one PCNA trimer with each molecule binding to one PCNA monomer. PCNA stimulates the nuclease activity without altering cleavage specificity. Mg(2+) serves as cofactor. Post-translationally, phosphorylated. Phosphorylation upon DNA damage induces relocalization to the nuclear plasma.

Its subcellular location is the nucleus. It localises to the nucleolus. It is found in the nucleoplasm. The protein resides in the mitochondrion. Inhibited by monovalent metal ions. Structure-specific nuclease with 5'-flap endonuclease and 5'-3' exonuclease activities involved in DNA replication and repair. During DNA replication, cleaves the 5'-overhanging flap structure that is generated by displacement synthesis when DNA polymerase encounters the 5'-end of a downstream Okazaki fragment. It enters the flap from the 5'-end and then tracks to cleave the flap base, leaving a nick for ligation. Also involved in the long patch base excision repair (LP-BER) pathway, by cleaving within the apurinic/apyrimidinic (AP) site-terminated flap. Acts as a genome stabilization factor that prevents flaps from equilibrating into structures that lead to duplications and deletions. Also possesses 5'-3' exonuclease activity on nicked or gapped double-stranded DNA, and exhibits RNase H activity. Also involved in replication and repair of rDNA and in repairing mitochondrial DNA. This is Flap endonuclease 1 from Plasmodium falciparum.